Consider the following 598-residue polypeptide: Aspartate--tRNA(Asp/Asn) ligase (598 aa).

Glu-175 contributes to the L-aspartate binding site. Residues 199–202 (QQFK) form an aspartate region. Residues Arg-221 and His-452 each coordinate L-aspartate. 221 to 223 (RDE) is a binding site for ATP. Residue Glu-486 coordinates ATP. Arg-493 serves as a coordination point for L-aspartate. 538–541 (GVDR) contacts ATP.

The protein belongs to the class-II aminoacyl-tRNA synthetase family. Type 1 subfamily. Homodimer.

Its subcellular location is the cytoplasm. It catalyses the reaction tRNA(Asx) + L-aspartate + ATP = L-aspartyl-tRNA(Asx) + AMP + diphosphate. In terms of biological role, aspartyl-tRNA synthetase with relaxed tRNA specificity since it is able to aspartylate not only its cognate tRNA(Asp) but also tRNA(Asn). Reaction proceeds in two steps: L-aspartate is first activated by ATP to form Asp-AMP and then transferred to the acceptor end of tRNA(Asp/Asn). In Gluconobacter oxydans (strain 621H) (Gluconobacter suboxydans), this protein is Aspartate--tRNA(Asp/Asn) ligase.